We begin with the raw amino-acid sequence, 246 residues long: E3 ubiquitin-protein ligase MARCHF2 (246 aa).

The RING-CH-type zinc finger occupies 56-116; sequence GTQSDGPICR…ELCHTEFAVE (61 aa). Zn(2+)-binding residues include Cys64, Cys67, Cys80, Cys82, His90, Cys93, Cys106, and Cys109. Transmembrane regions (helical) follow at residues 138-158 and 175-195; these read LFCD…SGWL and AVGL…WTLV.

Its subcellular location is the endoplasmic reticulum membrane. It is found in the lysosome membrane. The protein resides in the endosome membrane. It catalyses the reaction S-ubiquitinyl-[E2 ubiquitin-conjugating enzyme]-L-cysteine + [acceptor protein]-L-lysine = [E2 ubiquitin-conjugating enzyme]-L-cysteine + N(6)-ubiquitinyl-[acceptor protein]-L-lysine.. The protein operates within protein modification; protein ubiquitination. Functionally, E3 ubiquitin-protein ligase which may be involved in endosomal trafficking. E3 ubiquitin ligases accept ubiquitin from an E2 ubiquitin-conjugating enzyme in the form of a thioester and then directly transfer the ubiquitin to targeted substrates. This is E3 ubiquitin-protein ligase MARCHF2 (marchf2) from Xenopus laevis (African clawed frog).